Consider the following 79-residue polypeptide: MISKELLARINELAHKAKAEGLTELEEAERQELRQKYLKEFRAGFRQQVEMLQVYDKDGKEVTPEKVRQVQRDRGLRDD.

The protein belongs to the UPF0291 family.

It is found in the cytoplasm. In Lactiplantibacillus plantarum (strain ATCC BAA-793 / NCIMB 8826 / WCFS1) (Lactobacillus plantarum), this protein is UPF0291 protein lp_2062.